The sequence spans 120 residues: Adenosylhomocysteinase (120 aa).

An NAD(+)-binding site is contributed by asparagine 34.

The protein belongs to the adenosylhomocysteinase family. NAD(+) serves as cofactor.

The protein resides in the cytoplasm. The enzyme catalyses S-adenosyl-L-homocysteine + H2O = L-homocysteine + adenosine. The protein operates within amino-acid biosynthesis; L-homocysteine biosynthesis; L-homocysteine from S-adenosyl-L-homocysteine: step 1/1. May play a key role in the regulation of the intracellular concentration of adenosylhomocysteine. This chain is Adenosylhomocysteinase (ahcY), found in Streptomyces fradiae (Streptomyces roseoflavus).